We begin with the raw amino-acid sequence, 481 residues long: tRNA pseudouridine(38/39) synthase (481 aa).

Ala2 is modified (N-acetylalanine). The span at 29–40 shows a compositional bias: basic and acidic residues; the sequence is KKEQANNKDSNI. Residues 29–54 form a disordered region; it reads KKEQANNKDSNIRENSSGAGGKPKRA. Residue Asp118 is the Nucleophile of the active site. Tyr195 is a substrate binding site. Position 456 is a phosphothreonine (Thr456).

It belongs to the tRNA pseudouridine synthase TruA family.

The protein resides in the nucleus. It carries out the reaction uridine(38/39) in tRNA = pseudouridine(38/39) in tRNA. Formation of pseudouridine at position 39 in the anticodon stem and loop of transfer RNAs. The chain is tRNA pseudouridine(38/39) synthase (PUS3) from Bos taurus (Bovine).